Consider the following 705-residue polypeptide: Dolichyl-diphosphooligosaccharide--protein glycosyltransferase subunit STT3A (705 aa).

Over 1–15 (MTKLGFLRLSYEKQD) the chain is Cytoplasmic. The helical transmembrane segment at 16–34 (TLLKLLILSMAAVLSFSTR) threads the bilayer. The Lumenal segment spans residues 35–111 (LFAVLRFESV…VLHFFHITID (77 aa)). Residues 47–49 (EFD) carry the DXD motif 1 motif. Mn(2+) is bound at residue Asp-49. A helical membrane pass occupies residues 112-141 (IRNVCVFLAPLFSSFTTIVTYHLTKELKDA). Residue Gly-142 is a topological domain, cytoplasmic. Residues 143-158 (AGLLAAAMIAVVPGYI) form a helical membrane-spanning segment. The Lumenal portion of the chain corresponds to 159–170 (SRSVAGSYDNEG). Positions 167 and 169 each coordinate Mn(2+). The short motif at 167–169 (DNE) is the DXD motif 2 element. A helical transmembrane segment spans residues 171–188 (IAIFCMLLTYYMWIKAVK). Residues 189–191 (TGS) lie on the Cytoplasmic side of the membrane. Residues 192-207 (IYWAAKCALAYFYMVS) traverse the membrane as a helical segment. The Lumenal segment spans residues 208-210 (SWG). A helical transmembrane segment spans residues 211 to 229 (GYVFLINLIPLHVLVLMLT). Topologically, residues 230 to 234 (GRFSH) are cytoplasmic. A helical transmembrane segment spans residues 235–253 (RIYVAYCTVYCLGTILSMQ). At 254-265 (ISFVGFQPVLSS) the chain is on the lumenal side. Residues 266 to 283 (EHMAAFGVFGLCQIHAFV) traverse the membrane as a helical segment. Topologically, residues 284-298 (DYLRSKLNPQQFEVL) are cytoplasmic. Residues 299-317 (FRSVISLVGFVLLTVGALL) form a helical membrane-spanning segment. Topologically, residues 318–356 (MLTGKISPWTGRFYSLLDPSYAKNNIPIIASVSEHQPTT) are lumenal. An SVSE motif motif is present at residues 348–351 (SVSE). Residues 357-379 (WSSYYFDLQLLVFMFPVGLYYCF) traverse the membrane as a helical segment. The Cytoplasmic segment spans residues 380–385 (SNLSDA). Residues 386-402 (RIFIIMYGVTSMYFSAV) form a helical membrane-spanning segment. The Lumenal segment spans residues 403 to 406 (MVRL). Arg-405 contributes to the dolichyl diphosphooligosaccharide binding site. A helical membrane pass occupies residues 407-428 (MLVLAPVMCILSGIGVSQVLST). Over 429-453 (YMKNLDISRPDKKSKKQQDSTYPIK) the chain is Cytoplasmic. The chain crosses the membrane as a helical span at residues 454–473 (NEVASGMILVMAFFLITYTF). The Lumenal segment spans residues 474–705 (HSTWVTSEAY…DLDNRGLSRT (232 aa)). The tract at residues 525–527 (WWD) is interacts with target acceptor peptide in protein substrate. Residues 525–529 (WWDYG) carry the WWDYG motif motif. Tyr-530 is a dolichyl diphosphooligosaccharide binding site. Residues Asn-537 and Asn-544 are each glycosylated (N-linked (GlcNAc...) asparagine). An N-linked (GlcNAc...) (high mannose) asparagine glycan is attached at Asn-548. The DK motif motif lies at 592-599 (DINKFLWM).

The protein belongs to the STT3 family. In terms of assembly, component of the oligosaccharyltransferase (OST) complex. There are 2 OST complexes, OST-A and OST-B, which contain STT3A or STT3B as catalytic subunit, respectively. OST-A and OST-B contain common core subunits RPN1, RPN2, OST48, OST4, DAD1 and TMEM258, and OST-A contains DC2/OSTC and KRTCAP2/KCP2 specific accessory subunits. OST-A complex assembly occurs through the formation of 3 subcomplexes. Subcomplex 1 contains RPN1 and TMEM258, subcomplex 2 contains the OST-A-specific subunits STT3A, DC2/OSTC, and KCP2 as well as the core subunit OST4, and subcomplex 3 contains RPN2, DAD1, and OST48. The OST-A complex can form stable complexes with the Sec61 complex or with both the Sec61 and TRAP complexes. Mg(2+) serves as cofactor. It depends on Mn(2+) as a cofactor.

It is found in the endoplasmic reticulum membrane. It catalyses the reaction a di-trans,poly-cis-dolichyl diphosphooligosaccharide + L-asparaginyl-[protein] = N(4)-(oligosaccharide-(1-&gt;4)-N-acetyl-beta-D-glucosaminyl-(1-&gt;4)-N-acetyl-beta-D-glucosaminyl)-L-asparaginyl-[protein] + a di-trans,poly-cis-dolichyl diphosphate + H(+). It functions in the pathway protein modification; protein glycosylation. Its function is as follows. Catalytic subunit of the oligosaccharyl transferase (OST) complex that catalyzes the initial transfer of a defined glycan (Glc(3)Man(9)GlcNAc(2) in eukaryotes) from the lipid carrier dolichol-pyrophosphate to an asparagine residue within an Asn-X-Ser/Thr consensus motif in nascent polypeptide chains, the first step in protein N-glycosylation. N-glycosylation occurs cotranslationally and the complex associates with the Sec61 complex at the channel-forming translocon complex that mediates protein translocation across the endoplasmic reticulum (ER). All subunits are required for a maximal enzyme activity. This subunit contains the active site and the acceptor peptide and donor lipid-linked oligosaccharide (LLO) binding pockets. STT3A is present in the majority of OST complexes and mediates cotranslational N-glycosylation of most sites on target proteins, while STT3B-containing complexes are required for efficient post-translational glycosylation and mediate glycosylation of sites that have been skipped by STT3A. STT3A-containing OST-A complex is also required to prevent hyperglycosylation of some target proteins by preventing glycosylation of facultative sites before folding of target proteins is completed. The sequence is that of Dolichyl-diphosphooligosaccharide--protein glycosyltransferase subunit STT3A from Canis lupus familiaris (Dog).